A 311-amino-acid chain; its full sequence is Thioredoxin reductase (311 aa).

Residues serine 15–alanine 18, glutamate 37–alanine 44, asparagine 53, and valine 86 contribute to the FAD site. An intrachain disulfide couples cysteine 137 to cysteine 140. The NADP(+) site is built by serine 158, histidine 177, arginine 183, isoleucine 240, and tyrosine 260. Residues aspartate 280 and arginine 287 to isoleucine 290 contribute to the FAD site. Arginine 287 provides a ligand contact to NADP(+).

Belongs to the class-II pyridine nucleotide-disulfide oxidoreductase family. In terms of assembly, homodimer. It depends on FAD as a cofactor.

The protein resides in the cytoplasm. The enzyme catalyses [thioredoxin]-dithiol + NADP(+) = [thioredoxin]-disulfide + NADPH + H(+). The sequence is that of Thioredoxin reductase from Mycolicibacterium smegmatis (Mycobacterium smegmatis).